The following is a 444-amino-acid chain: UDP-N-acetylglucosamine 1-carboxyvinyltransferase (444 aa).

22–23 (KN) serves as a coordination point for phosphoenolpyruvate. Arg94 is a binding site for UDP-N-acetyl-alpha-D-glucosamine. The Proton donor role is filled by Asp119. Positions 309 and 331 each coordinate UDP-N-acetyl-alpha-D-glucosamine.

This sequence belongs to the EPSP synthase family. MurA subfamily.

It is found in the cytoplasm. The enzyme catalyses phosphoenolpyruvate + UDP-N-acetyl-alpha-D-glucosamine = UDP-N-acetyl-3-O-(1-carboxyvinyl)-alpha-D-glucosamine + phosphate. The protein operates within cell wall biogenesis; peptidoglycan biosynthesis. Its function is as follows. Cell wall formation. Adds enolpyruvyl to UDP-N-acetylglucosamine. In Chlamydia trachomatis serovar A (strain ATCC VR-571B / DSM 19440 / HAR-13), this protein is UDP-N-acetylglucosamine 1-carboxyvinyltransferase.